The chain runs to 538 residues: DALR anticodon-binding domain-containing protein 3 (538 aa).

Part of a complex containing tRNA(Arg) and METTL2. Interacts with tRNA(Arg)(CCU) and tRNA(Arg)(UCU). Interacts with METTL2.

Functionally, involved in tRNA methylation. Facilitates the recognition and targeting of tRNA(Arg)(CCU) and tRNA(Arg)(UCU) substrates for N(3)-methylcytidine modification by METTL2. The chain is DALR anticodon-binding domain-containing protein 3 (Dalrd3) from Mus musculus (Mouse).